We begin with the raw amino-acid sequence, 96 residues long: DNA-directed RNA polymerase subunit Rpo11 (96 aa).

It belongs to the archaeal Rpo11/eukaryotic RPB11/RPC19 RNA polymerase subunit family. As to quaternary structure, part of the RNA polymerase complex.

Its subcellular location is the cytoplasm. It catalyses the reaction RNA(n) + a ribonucleoside 5'-triphosphate = RNA(n+1) + diphosphate. Functionally, DNA-dependent RNA polymerase (RNAP) catalyzes the transcription of DNA into RNA using the four ribonucleoside triphosphates as substrates. The sequence is that of DNA-directed RNA polymerase subunit Rpo11 from Methanococcus maripaludis (strain DSM 14266 / JCM 13030 / NBRC 101832 / S2 / LL).